Here is a 93-residue protein sequence, read N- to C-terminus: Small ribosomal subunit protein uS19 (93 aa).

The protein belongs to the universal ribosomal protein uS19 family.

Its function is as follows. Protein S19 forms a complex with S13 that binds strongly to the 16S ribosomal RNA. This chain is Small ribosomal subunit protein uS19, found in Brevibacillus brevis (strain 47 / JCM 6285 / NBRC 100599).